A 135-amino-acid chain; its full sequence is Large ribosomal subunit protein bL17 (135 aa).

The protein belongs to the bacterial ribosomal protein bL17 family. As to quaternary structure, part of the 50S ribosomal subunit. Contacts protein L32.

This Rhodopseudomonas palustris (strain BisB18) protein is Large ribosomal subunit protein bL17.